Here is a 212-residue protein sequence, read N- to C-terminus: MSDFLTIAIPKGRILEESVALFGKIGIHCDELLSNTRKLIFENREQRMRYMIVRATDVPTYVEYGCADLGIVGKDTLMEQEKDLYEPLDLKFGYCRMMVAEPAGLARDDDPSSWSNIRIATKYPNVTEKYFAKKGVQVEIIKLYGSIELAPLVGLSERIVDLVSTGETLRQNGLVEVETIAEITTRLIVNRASLKTKHPRITEIIEGLEKHV.

This sequence belongs to the ATP phosphoribosyltransferase family. Short subfamily. In terms of assembly, heteromultimer composed of HisG and HisZ subunits.

The protein localises to the cytoplasm. The enzyme catalyses 1-(5-phospho-beta-D-ribosyl)-ATP + diphosphate = 5-phospho-alpha-D-ribose 1-diphosphate + ATP. Its pathway is amino-acid biosynthesis; L-histidine biosynthesis; L-histidine from 5-phospho-alpha-D-ribose 1-diphosphate: step 1/9. In terms of biological role, catalyzes the condensation of ATP and 5-phosphoribose 1-diphosphate to form N'-(5'-phosphoribosyl)-ATP (PR-ATP). Has a crucial role in the pathway because the rate of histidine biosynthesis seems to be controlled primarily by regulation of HisG enzymatic activity. This Geobacter metallireducens (strain ATCC 53774 / DSM 7210 / GS-15) protein is ATP phosphoribosyltransferase.